We begin with the raw amino-acid sequence, 129 residues long: Glycine cleavage system H protein (129 aa).

The Lipoyl-binding domain maps to 24-106; that stretch reads LVRVGISAFA…HGEGWLLVVR (83 aa). K65 is subject to N6-lipoyllysine.

This sequence belongs to the GcvH family. The glycine cleavage system is composed of four proteins: P, T, L and H. The cofactor is (R)-lipoate.

Functionally, the glycine cleavage system catalyzes the degradation of glycine. The H protein shuttles the methylamine group of glycine from the P protein to the T protein. The chain is Glycine cleavage system H protein from Prochlorococcus marinus (strain MIT 9303).